A 371-amino-acid polypeptide reads, in one-letter code: Leu/Ile/Val-binding protein homolog 2 (371 aa).

An N-terminal signal peptide occupies residues 1-23 (MKKSLFCGVCLCALVAMGGTSFA).

This sequence belongs to the leucine-binding protein family.

In terms of biological role, component of an amino-acid transport system. This chain is Leu/Ile/Val-binding protein homolog 2, found in Brucella abortus (strain 2308).